The primary structure comprises 467 residues: UDP-N-acetylmuramate--L-alanine ligase (467 aa).

114–120 (GTHGKTT) is an ATP binding site.

It belongs to the MurCDEF family.

It localises to the cytoplasm. It carries out the reaction UDP-N-acetyl-alpha-D-muramate + L-alanine + ATP = UDP-N-acetyl-alpha-D-muramoyl-L-alanine + ADP + phosphate + H(+). It participates in cell wall biogenesis; peptidoglycan biosynthesis. In terms of biological role, cell wall formation. This chain is UDP-N-acetylmuramate--L-alanine ligase, found in Chlorobium chlorochromatii (strain CaD3).